Here is a 113-residue protein sequence, read N- to C-terminus: UPF0122 protein LAF_1235 (113 aa).

This sequence belongs to the UPF0122 family.

Functionally, might take part in the signal recognition particle (SRP) pathway. This is inferred from the conservation of its genetic proximity to ftsY/ffh. May be a regulatory protein. In Limosilactobacillus fermentum (strain NBRC 3956 / LMG 18251) (Lactobacillus fermentum), this protein is UPF0122 protein LAF_1235.